The chain runs to 358 residues: Probable branched-chain-amino-acid aminotransferase (358 aa).

Lys-196 is subject to N6-(pyridoxal phosphate)lysine.

Belongs to the class-IV pyridoxal-phosphate-dependent aminotransferase family. The cofactor is pyridoxal 5'-phosphate.

The catalysed reaction is L-leucine + 2-oxoglutarate = 4-methyl-2-oxopentanoate + L-glutamate. It carries out the reaction L-isoleucine + 2-oxoglutarate = (S)-3-methyl-2-oxopentanoate + L-glutamate. It catalyses the reaction L-valine + 2-oxoglutarate = 3-methyl-2-oxobutanoate + L-glutamate. It participates in amino-acid biosynthesis; L-isoleucine biosynthesis; L-isoleucine from 2-oxobutanoate: step 4/4. Its pathway is amino-acid biosynthesis; L-leucine biosynthesis; L-leucine from 3-methyl-2-oxobutanoate: step 4/4. It functions in the pathway amino-acid biosynthesis; L-valine biosynthesis; L-valine from pyruvate: step 4/4. Acts on leucine, isoleucine and valine. This chain is Probable branched-chain-amino-acid aminotransferase (ilvE), found in Staphylococcus aureus (strain MRSA252).